We begin with the raw amino-acid sequence, 743 residues long: Dystrobrevin alpha (743 aa).

Positions 1–288 are interaction with MAGEE1; sequence MIEDSGKRGN…SHSNQHQMKE (288 aa). A ZZ-type zinc finger spans residues 238–294; the sequence is FHPVECSYCHSESMMGFRYRCQQCHNYQLCQDCFWRGHAGGSHSNQHQMKEYTSWKS. Residues Cys-243, Cys-246, Cys-258, Cys-261, Cys-267, Cys-270, His-280, and His-284 each contribute to the Zn(2+) site. Positions 400–450 are syntrophin-binding region; it reads DRLADEHVLIGLYVNMLRNNPSCMLESSNRLDEEHRLIARYAARLAAESSS. Residues 461–556 are a coiled coil; that stretch reads DISFTIDANK…EGLMKLLKTQ (96 aa). The segment at 556-575 is disordered; that stretch reads QGAGSPRSSPSHTISRPIPM. The span at 557-569 shows a compositional bias: polar residues; sequence GAGSPRSSPSHTI. Ser-662 carries the phosphoserine modification.

It belongs to the dystrophin family. Dystrobrevin subfamily. As to quaternary structure, interacts with dystrophin, utrophin and the syntrophins SNTA1, SNTB1, SNTB2, SNTG1 and SNTG2. Interacts with MAGEE1. Binds dystrobrevin binding protein 1. Interacts with CTNNAL1. The interaction is required for correct localization of both CTNNAL1 and DTNA. In terms of assembly, does not interact with dystrophin. In terms of processing, phosphorylation of DTN-1 on tyrosine kinase substrate domain present in the C-terminus. Highly expressed in brain, skeletal and cardiac muscles, and expressed at lower levels in lung, liver and pancreas. Isoform 2 is not expressed in cardiac muscle. Isoform 7 and isoform 8 are only expressed in muscle.

It localises to the cytoplasm. It is found in the synapse. Its subcellular location is the cell membrane. Functionally, may be involved in the formation and stability of synapses as well as being involved in the clustering of nicotinic acetylcholine receptors. This chain is Dystrobrevin alpha, found in Homo sapiens (Human).